A 49-amino-acid polypeptide reads, in one-letter code: Glutathione peroxidase (49 aa).

It belongs to the glutathione peroxidase family.

The catalysed reaction is 2 glutathione + H2O2 = glutathione disulfide + 2 H2O. Inhibited by Cu(2+), SDS and DTT. Activity is slightly increased by Fe(2+), Mn(2+), triton X-100 and EDTA. Functionally, glutathione peroxidase which may protect the cell from oxidative damage. The polypeptide is Glutathione peroxidase (Lactiplantibacillus plantarum (Lactobacillus plantarum)).